The primary structure comprises 251 residues: Cytochrome c oxidase subunit 2 (251 aa).

A propeptide spans M1–N15 (removed in mature form). The Mitochondrial intermembrane segment spans residues D16–T30. A helical transmembrane segment spans residues P31–T64. The Mitochondrial matrix portion of the chain corresponds to Y65–G78. Residues Q79–D108 form a helical membrane-spanning segment. The Mitochondrial intermembrane segment spans residues E109–Q251. Cu cation contacts are provided by H186, C221, E223, C225, H229, and M232. E223 contributes to the Mg(2+) binding site.

Belongs to the cytochrome c oxidase subunit 2 family. As to quaternary structure, component of the cytochrome c oxidase (complex IV, CIV), a multisubunit enzyme composed of 12 subunits. The complex is composed of a catalytic core of 3 subunits COX1, COX2 and COX3, encoded in the mitochondrial DNA, and 9 supernumerary subunits COX4, COX5A (or COX5B), COX6, COX7, COX8, COX9, COX12, COX13 and COX26, which are encoded in the nuclear genome. The complex exists as a monomer or a dimer and forms supercomplexes (SCs) in the inner mitochondrial membrane with a dimer of ubiquinol-cytochrome c oxidoreductase (cytochrome b-c1 complex, complex III, CIII), resulting in 2 different assemblies (supercomplexes III(2)IV and III(2)IV(2)). Cu cation is required as a cofactor. In terms of processing, the N-terminal sequence of COX2 is processed by IMP1.

It localises to the mitochondrion inner membrane. It catalyses the reaction 4 Fe(II)-[cytochrome c] + O2 + 8 H(+)(in) = 4 Fe(III)-[cytochrome c] + 2 H2O + 4 H(+)(out). In terms of biological role, component of the cytochrome c oxidase, the last enzyme in the mitochondrial electron transport chain which drives oxidative phosphorylation. The respiratory chain contains 3 multisubunit complexes succinate dehydrogenase (complex II, CII), ubiquinol-cytochrome c oxidoreductase (cytochrome b-c1 complex, complex III, CIII) and cytochrome c oxidase (complex IV, CIV), that cooperate to transfer electrons derived from NADH and succinate to molecular oxygen, creating an electrochemical gradient over the inner membrane that drives transmembrane transport and the ATP synthase. Cytochrome c oxidase is the component of the respiratory chain that catalyzes the reduction of oxygen to water. Electrons originating from reduced cytochrome c in the intermembrane space (IMS) are transferred via the dinuclear copper A center (CU(A)) of COX2 and heme A of COX1 to the active site in COX1, a binuclear center (BNC) formed by heme A3 and copper B (CU(B)). The BNC reduces molecular oxygen to 2 water molecules unsing 4 electrons from cytochrome c in the IMS and 4 protons from the mitochondrial matrix. COX2 is a catalytic core subunit which transfers the electrons from cytochrome c via its dinuclear copper A center (CU(A)) to the BNC of the COX1. The chain is Cytochrome c oxidase subunit 2 (COX2) from Saccharomyces cerevisiae (strain ATCC 204508 / S288c) (Baker's yeast).